A 237-amino-acid chain; its full sequence is Large ribosomal subunit protein uL1 (237 aa).

It belongs to the universal ribosomal protein uL1 family. Part of the 50S ribosomal subunit.

Its function is as follows. Binds directly to 23S rRNA. The L1 stalk is quite mobile in the ribosome, and is involved in E site tRNA release. Protein L1 is also a translational repressor protein, it controls the translation of the L11 operon by binding to its mRNA. The chain is Large ribosomal subunit protein uL1 from Chloroflexus aggregans (strain MD-66 / DSM 9485).